Consider the following 726-residue polypeptide: Germacradienol/geosmin synthase (726 aa).

Residues 2-354 (TQQPFQLPHF…TSAADVGALL (353 aa)) form a germacradienol/germacrene D synthase region. Mg(2+) is bound by residues aspartate 86, glutamate 91, asparagine 267, threonine 271, glutamine 276, aspartate 455, asparagine 598, serine 602, and glutamate 606. The DDXXD motif 1; degenerate signature appears at 86–91 (DDHFLE). Positions 355–726 (ADAVAQRARS…VPRSSPALTH (372 aa)) are geosmin synthase. The short motif at 455 to 459 (DDYYP) is the DDXXD motif 2; degenerate element.

It belongs to the terpene synthase family. It depends on Mg(2+) as a cofactor.

It catalyses the reaction (2E,6E)-farnesyl diphosphate + H2O = (1E,4S,5E,7R)-germacra-1(10),5-dien-11-ol + diphosphate. It carries out the reaction (1E,4S,5E,7R)-germacra-1(10),5-dien-11-ol + H2O = (-)-geosmin + acetone. The catalysed reaction is (2E,6E)-farnesyl diphosphate = (-)-germacrene D + diphosphate. It participates in secondary metabolite biosynthesis; geosmin biosynthesis. The protein operates within sesquiterpene biosynthesis; germacradienol biosynthesis; germacradienol from farnesyl diphosphate: step 1/1. Its pathway is sesquiterpene biosynthesis; germacrene D biosynthesis; germacrene D from farnesyl diphosphate: step 1/1. Functionally, tow-domain protein where the N-terminal domain catalyzes the cyclization of farnesyl diphosphate (FPP) to a 85:15 mixture of the sesquiterpene alcohol germacradienol and the sesquiterpene hydrocarbon germacrene D. The C-terminal domain partially converts the germacradienol formed into geosmin, the characteristic odoriferous ('earthy aroma') constituent of Streptomyces species. The polypeptide is Germacradienol/geosmin synthase (cyc2) (Streptomyces coelicolor (strain ATCC BAA-471 / A3(2) / M145)).